The chain runs to 634 residues: Microtubule-associated protein 70-2 (634 aa).

Residues 1–57 are disordered; sequence MSDVSGDGDLSATVTEHEVTPQPPVSSATYPSLTVSASYKESSGGKSSSKRRPIRPS. Over residues 25–35 the composition is skewed to polar residues; that stretch reads VSSATYPSLTV. Residues 36–47 show a composition bias toward low complexity; that stretch reads SASYKESSGGKS. The stretch at 74–392 forms a coiled coil; the sequence is DPVKVELNRL…LRLKVLEETL (319 aa). The tract at residues 258–494 is required for targeting to microtubules; the sequence is ILDRMHRQKV…YSFNKATDDS (237 aa). 2 stretches are compositionally biased toward polar residues: residues 393-417 and 443-464; these read RGTS…SRRQ and MRHS…TSKS. Disordered regions lie at residues 393-526 and 594-634; these read RGTS…SVPG and VEKD…KSTQ. The stretch at 532 to 601 forms a coiled coil; that stretch reads LQKEVVSLRK…MRVEKDQDAR (70 aa). Over residues 605–616 the composition is skewed to polar residues; that stretch reads FSNSKSPSNTAQ.

The protein belongs to the MAP70 family.

Its subcellular location is the cytoplasm. The protein resides in the cytoskeleton. In terms of biological role, plant-specific protein that interact with microtubules. The protein is Microtubule-associated protein 70-2 (MAP70.2) of Arabidopsis thaliana (Mouse-ear cress).